Here is a 907-residue protein sequence, read N- to C-terminus: Leucine-rich repeat-containing G-protein coupled receptor 5 (907 aa).

The signal sequence occupies residues 1–21; the sequence is MDTSRVRMLLSLLALLQLVAA. Residues 22-561 are Extracellular-facing; the sequence is GSPPRPDTMP…EHLFGSWLIR (540 aa). An LRRNT domain is found at 33-64; sequence GCPSYCHCELDGRMLLRVDCSDLGLSELPSNL. Cystine bridges form between Cys34–Cys40 and Cys38–Cys52. LRR repeat units follow at residues 44-64, 65-88, 89-112, 114-136, 137-160, 162-184, 186-208, 209-232, 233-256, 257-279, 281-303, 304-327, 328-350, 351-375, 377-396, 397-420, and 422-444; these read GRMLLRVDCSDLGLSELPSNL, SVFTSYLDLSMNNISQLPASLLHR, LRFLEELRLAGNALTHIPKGAFAG, HSLKVLMLQNNQLRQVPEEALQN, LRSLQSLRLDANHISYVPPSCFSG, HSLRHLWLDDNALTDVPVQAFRS, SALQAMTLALNKIHHIADHAFGN, LSSLVVLHLHNNRIHSLGKKCFDG, LHSLETLDLNYNNLDEFPTAIKTL, SNLKELGFHSNNIRSIPERAFVG, PSLITIHFYDNPIQFVGISAFQH, LPELRTLTLNGASQITEFPDLTGT, ATLESLTLTGAKISSLPQTVCDQ, LPNLQVLDLSYNLLEDLPSLSGCQK, QKIDLRHNEIYEIKGGTFQQ, LFNLRSLNLARNKIAIIHPNAFST, and PSLIKLDLSSNLLSSFPVTGLHG. 2 N-linked (GlcNAc...) asparagine glycosylation sites follow: Asn63 and Asn77. Asn208 carries an N-linked (GlcNAc...) asparagine glycan. An intrachain disulfide couples Cys348 to Cys373. Cysteines 479 and 541 form a disulfide. Residues 562–582 traverse the membrane as a helical segment; it reads IGVWTTAVLALSCNALVAFTV. The stretch at 564–585 is one LRR 18 repeat; sequence VWTTAVLALSCNALVAFTVFRT. Over 583 to 595 the chain is Cytoplasmic; it reads FRTPLYISSIKLL. The chain crosses the membrane as a helical span at residues 596–616; the sequence is IGVIAVVDILMGVSSAILAVV. Topologically, residues 617–638 are extracellular; that stretch reads DTFTFGSFAQHGAWWEGGIGCQ. Residues Cys637 and Cys712 are joined by a disulfide bond. Residues 639–659 traverse the membrane as a helical segment; that stretch reads IVGFLSIFASESSVFLLTLAA. The Cytoplasmic portion of the chain corresponds to 660–682; sequence LERGFSVKCSSKFEMKAPLSSLK. A helical transmembrane segment spans residues 683 to 703; the sequence is AIILLCVLLALTIATVPLLGG. Over 704–723 the chain is Extracellular; it reads SEYNASPLCLPLPFGEPSTT. A helical membrane pass occupies residues 724-744; sequence GYMVALVLLNSLCFLIMTIAY. Residues 745–775 lie on the Cytoplasmic side of the membrane; sequence TRLYCSLEKGELENLWDCSMVKHTALLLFTN. A helical transmembrane segment spans residues 776 to 796; it reads CILYCPVAFLSFSSLLNLTFI. The Extracellular segment spans residues 797 to 802; the sequence is SPEVIK. The chain crosses the membrane as a helical span at residues 803-823; it reads FILLVIVPLPACLNPLLYIVF. The Cytoplasmic portion of the chain corresponds to 824–907; sequence NPHFKEDMGS…LSSVAFVPCL (84 aa).

Belongs to the G-protein coupled receptor 1 family. As to quaternary structure, identified in a complex composed of RNF43, LGR5 and RSPO1. Also interacts with other R-spondin ligands, including RSPO2, RSPO3 and RSPO4.

The protein resides in the cell membrane. Its subcellular location is the golgi apparatus. It localises to the trans-Golgi network membrane. In terms of biological role, receptor for R-spondins that potentiates the canonical Wnt signaling pathway and acts as a stem cell marker of the intestinal epithelium and the hair follicle. Upon binding to R-spondins (RSPO1, RSPO2, RSPO3 or RSPO4), associates with phosphorylated LRP6 and frizzled receptors that are activated by extracellular Wnt receptors, triggering the canonical Wnt signaling pathway to increase expression of target genes. In contrast to classical G-protein coupled receptors, does not activate heterotrimeric G-proteins to transduce the signal. Involved in the development and/or maintenance of the adult intestinal stem cells during postembryonic development. The protein is Leucine-rich repeat-containing G-protein coupled receptor 5 (Lgr5) of Rattus norvegicus (Rat).